A 251-amino-acid polypeptide reads, in one-letter code: Hydroxyacylglutathione hydrolase (251 aa).

The Zn(2+) site is built by histidine 53, histidine 55, aspartate 57, histidine 58, histidine 110, aspartate 127, and histidine 165.

This sequence belongs to the metallo-beta-lactamase superfamily. Glyoxalase II family. As to quaternary structure, monomer. Requires Zn(2+) as cofactor.

It carries out the reaction an S-(2-hydroxyacyl)glutathione + H2O = a 2-hydroxy carboxylate + glutathione + H(+). It participates in secondary metabolite metabolism; methylglyoxal degradation; (R)-lactate from methylglyoxal: step 2/2. Thiolesterase that catalyzes the hydrolysis of S-D-lactoyl-glutathione to form glutathione and D-lactic acid. The polypeptide is Hydroxyacylglutathione hydrolase (Salmonella paratyphi A (strain ATCC 9150 / SARB42)).